We begin with the raw amino-acid sequence, 300 residues long: Free fatty acid receptor 1 (300 aa).

Topologically, residues 1 to 8 (MDLPPQLS) are extracellular. Residues 9 to 31 (FALYVSAFALGFPLNLLAIRGAV) form a helical membrane-spanning segment. Over 32–41 (SHAKLRLTPS) the chain is Cytoplasmic. The helical transmembrane segment at 42–64 (LVYTLHLACSDLLLAITLPLKAV) threads the bilayer. At 65-79 (EALASGVWPLPLPFC) the chain is on the extracellular side. Cys79 and Cys170 are oxidised to a cystine. A helical transmembrane segment spans residues 80 to 101 (PVFALAHFAPLYAGGGFLAALS). Residues 102–121 (AGRYLGAAFPFGYQAIRRPC) are Cytoplasmic-facing. Residues 122–142 (YSWGVCVAIWALVLCHLGLAL) traverse the membrane as a helical segment. The Extracellular portion of the chain corresponds to 143 to 178 (GLEAPRGWVDNTTSSLGINIPVNGSPVCLEAWDPDS). A glycan (N-linked (GlcNAc...) asparagine) is linked at Asn153. The helical transmembrane segment at 179-200 (ARPARLSFSILLFFLPLVITAF) threads the bilayer. Topologically, residues 201-223 (CYVGCLRALVHSGLSHKRKLRAA) are cytoplasmic. Residues 224–248 (WVAGGALLTLLLCLGPYNASNVASF) traverse the membrane as a helical segment. Residues 249 to 256 (INPDLEGS) lie on the Extracellular side of the membrane. A helical membrane pass occupies residues 257–279 (WRKLGLITGAWSVVLNPLVTGYL). The Cytoplasmic segment spans residues 280–300 (GTGPGQGTICVTRTPRGTIQK).

Belongs to the G-protein coupled receptor 1 family. Expressed abundantly in pancreatic beta cells.

It is found in the cell membrane. Its function is as follows. G-protein coupled receptor for medium and long chain saturated and unsaturated fatty acids that plays an important role in glucose homeostasis. Fatty acid binding increases glucose-stimulated insulin secretion, and may also enhance the secretion of glucagon-like peptide 1 (GLP-1). May also play a role in bone homeostasis; receptor signaling activates pathways that inhibit osteoclast differentiation. Ligand binding leads to a conformation change that triggers signaling via G-proteins that activate phospholipase C, leading to an increase of the intracellular calcium concentration. Seems to act through a G(q) and G(i)-mediated pathway. Mediates the anti-inflammatory effects of omega-3 polyunsaturated fatty acids (PUFAs) via inhibition of NLRP3 inflammasome activation. This is Free fatty acid receptor 1 (Ffar1) from Rattus norvegicus (Rat).